A 422-amino-acid polypeptide reads, in one-letter code: Probable sucrose-phosphatase 2 (422 aa).

Belongs to the sucrose phosphatase family. In terms of assembly, homodimer. Mg(2+) is required as a cofactor.

The catalysed reaction is sucrose 6(F)-phosphate + H2O = sucrose + phosphate. It participates in glycan biosynthesis; sucrose biosynthesis; sucrose from D-fructose 6-phosphate and UDP-alpha-D-glucose: step 2/2. Functionally, catalyzes the final step of sucrose synthesis. The chain is Probable sucrose-phosphatase 2 (SPP2) from Arabidopsis thaliana (Mouse-ear cress).